A 617-amino-acid polypeptide reads, in one-letter code: Dihydroxy-acid dehydratase (617 aa).

Position 81 (aspartate 81) interacts with Mg(2+). Residue cysteine 122 participates in [2Fe-2S] cluster binding. Residues aspartate 123 and lysine 124 each coordinate Mg(2+). Position 124 is an N6-carboxylysine (lysine 124). Residue cysteine 195 participates in [2Fe-2S] cluster binding. Glutamate 492 provides a ligand contact to Mg(2+). Catalysis depends on serine 518, which acts as the Proton acceptor.

The protein belongs to the IlvD/Edd family. Homodimer. It depends on [2Fe-2S] cluster as a cofactor. Requires Mg(2+) as cofactor.

The catalysed reaction is (2R)-2,3-dihydroxy-3-methylbutanoate = 3-methyl-2-oxobutanoate + H2O. The enzyme catalyses (2R,3R)-2,3-dihydroxy-3-methylpentanoate = (S)-3-methyl-2-oxopentanoate + H2O. It participates in amino-acid biosynthesis; L-isoleucine biosynthesis; L-isoleucine from 2-oxobutanoate: step 3/4. The protein operates within amino-acid biosynthesis; L-valine biosynthesis; L-valine from pyruvate: step 3/4. Functionally, functions in the biosynthesis of branched-chain amino acids. Catalyzes the dehydration of (2R,3R)-2,3-dihydroxy-3-methylpentanoate (2,3-dihydroxy-3-methylvalerate) into 2-oxo-3-methylpentanoate (2-oxo-3-methylvalerate) and of (2R)-2,3-dihydroxy-3-methylbutanoate (2,3-dihydroxyisovalerate) into 2-oxo-3-methylbutanoate (2-oxoisovalerate), the penultimate precursor to L-isoleucine and L-valine, respectively. The protein is Dihydroxy-acid dehydratase of Xanthobacter autotrophicus (strain ATCC BAA-1158 / Py2).